The following is a 225-amino-acid chain: MNSMRFSLLDRTTQNSVISTTSNDLSNWSRLSSLWPLLYGTSCCFIEFASLIGSRFDFDRYGLVPRSSPRQADIILTAGTVTMKMAPSLVRLYEQMPEPKYVIAMGACTITGGMFSTDSYSTVRGVDKLIPVDVYLPGCPPKPEAIIDAITKLRKKLSREIYEDRIGCQQENRCFTTNHKFRVGRSTHTGNYDQGLLYQSPSTSEIPFESFLKYKSSVSSHELVN.

[4Fe-4S] cluster is bound by residues Cys43, Cys44, Cys108, and Cys139.

The protein belongs to the complex I 20 kDa subunit family. As to quaternary structure, NDH is composed of at least 16 different subunits, 5 of which are encoded in the nucleus. [4Fe-4S] cluster is required as a cofactor.

The protein localises to the plastid. It localises to the chloroplast thylakoid membrane. The enzyme catalyses a plastoquinone + NADH + (n+1) H(+)(in) = a plastoquinol + NAD(+) + n H(+)(out). It carries out the reaction a plastoquinone + NADPH + (n+1) H(+)(in) = a plastoquinol + NADP(+) + n H(+)(out). In terms of biological role, NDH shuttles electrons from NAD(P)H:plastoquinone, via FMN and iron-sulfur (Fe-S) centers, to quinones in the photosynthetic chain and possibly in a chloroplast respiratory chain. The immediate electron acceptor for the enzyme in this species is believed to be plastoquinone. Couples the redox reaction to proton translocation, and thus conserves the redox energy in a proton gradient. This is NAD(P)H-quinone oxidoreductase subunit K, chloroplastic from Illicium oligandrum (Star anise).